We begin with the raw amino-acid sequence, 235 residues long: Ribitol-5-phosphate cytidylyltransferase (235 aa).

Residues 7–10 (LAGG), 82–88 (GADRNTS), and S113 each bind CTP.

The protein belongs to the IspD/TarI cytidylyltransferase family. TarI subfamily.

The enzyme catalyses D-ribitol 5-phosphate + CTP + H(+) = CDP-L-ribitol + diphosphate. It participates in cell wall biogenesis; poly(ribitol phosphate) teichoic acid biosynthesis. Catalyzes the transfer of the cytidylyl group of CTP to D-ribitol 5-phosphate. The sequence is that of Ribitol-5-phosphate cytidylyltransferase from Streptococcus pneumoniae serotype 2 (strain D39 / NCTC 7466).